A 186-amino-acid polypeptide reads, in one-letter code: ATP synthase subunit delta (186 aa).

This sequence belongs to the ATPase delta chain family. As to quaternary structure, F-type ATPases have 2 components, F(1) - the catalytic core - and F(0) - the membrane proton channel. F(1) has five subunits: alpha(3), beta(3), gamma(1), delta(1), epsilon(1). F(0) has three main subunits: a(1), b(2) and c(10-14). The alpha and beta chains form an alternating ring which encloses part of the gamma chain. F(1) is attached to F(0) by a central stalk formed by the gamma and epsilon chains, while a peripheral stalk is formed by the delta and b chains.

It localises to the cell inner membrane. In terms of biological role, f(1)F(0) ATP synthase produces ATP from ADP in the presence of a proton or sodium gradient. F-type ATPases consist of two structural domains, F(1) containing the extramembraneous catalytic core and F(0) containing the membrane proton channel, linked together by a central stalk and a peripheral stalk. During catalysis, ATP synthesis in the catalytic domain of F(1) is coupled via a rotary mechanism of the central stalk subunits to proton translocation. Functionally, this protein is part of the stalk that links CF(0) to CF(1). It either transmits conformational changes from CF(0) to CF(1) or is implicated in proton conduction. This chain is ATP synthase subunit delta, found in Bacteroides fragilis (strain ATCC 25285 / DSM 2151 / CCUG 4856 / JCM 11019 / LMG 10263 / NCTC 9343 / Onslow / VPI 2553 / EN-2).